The primary structure comprises 355 residues: 3-dehydroquinate synthase (355 aa).

Residues 71 to 76 (EGEASK), 105 to 109 (GVVGD), 129 to 130 (TS), Lys-142, and Lys-151 contribute to the NAD(+) site. Zn(2+) is bound by residues Glu-184, His-246, and His-263.

This sequence belongs to the sugar phosphate cyclases superfamily. Dehydroquinate synthase family. Co(2+) is required as a cofactor. The cofactor is Zn(2+). Requires NAD(+) as cofactor.

It is found in the cytoplasm. The catalysed reaction is 7-phospho-2-dehydro-3-deoxy-D-arabino-heptonate = 3-dehydroquinate + phosphate. The protein operates within metabolic intermediate biosynthesis; chorismate biosynthesis; chorismate from D-erythrose 4-phosphate and phosphoenolpyruvate: step 2/7. In terms of biological role, catalyzes the conversion of 3-deoxy-D-arabino-heptulosonate 7-phosphate (DAHP) to dehydroquinate (DHQ). This is 3-dehydroquinate synthase from Streptococcus thermophilus (strain ATCC BAA-491 / LMD-9).